The chain runs to 242 residues: Small ribosomal subunit protein uS2 (242 aa).

It belongs to the universal ribosomal protein uS2 family.

The sequence is that of Small ribosomal subunit protein uS2 from Shewanella amazonensis (strain ATCC BAA-1098 / SB2B).